The primary structure comprises 300 residues: Cation-efflux pump FieF (300 aa).

Helical transmembrane passes span 12 to 32 (AAIA…FAWW), 39 to 59 (ILAA…NLLV), 82 to 102 (AALA…LTGI), 114 to 134 (PGVG…LVSF), 151 to 171 (MLHY…LALS), and 172 to 192 (WYGW…YILY). Positions 45 and 49 each coordinate Zn(2+). The Zn(2+) site is built by H153 and D157.

It belongs to the cation diffusion facilitator (CDF) transporter (TC 2.A.4) family. FieF subfamily. In terms of assembly, homodimer.

It is found in the cell inner membrane. It carries out the reaction Zn(2+)(in) + H(+)(out) = Zn(2+)(out) + H(+)(in). The enzyme catalyses Cd(2+)(in) + H(+)(out) = Cd(2+)(out) + H(+)(in). It catalyses the reaction Fe(2+)(in) + H(+)(out) = Fe(2+)(out) + H(+)(in). Its function is as follows. Divalent metal cation transporter which exports Zn(2+), Cd(2+) and possibly Fe(2+). May be involved in zinc and iron detoxification by efflux. In Escherichia fergusonii (strain ATCC 35469 / DSM 13698 / CCUG 18766 / IAM 14443 / JCM 21226 / LMG 7866 / NBRC 102419 / NCTC 12128 / CDC 0568-73), this protein is Cation-efflux pump FieF.